We begin with the raw amino-acid sequence, 514 residues long: MKKKPYQIEIIQKKAPYHPDPTMIFNHLCESRSATLLLETAEVNKKKDLESIMIIDSAIRISSKKNLVKLKPLSINGEEILLALKKRIPKKIEIYEKNKNIILVFPKIEKNLDEDKKLFSLSVFDAFRFMIKIFENKEKKSKAMFFGGLFSYDLSQFFESLPKLKGNQKCSNFCFYLAETLLVLDHQKKTCLIQNSLFTKNANEKKRIKERSIEIEKKLNEKLKSIPKVKITDINLTSNMNNFEYGSIIKKLQKLIQKGEIFQVVPSRKFYLPCPNPLSAYQKLKKSNPSPYMFFMQDKDFTLFGASPESSLKYDEKTRKIELYPIAGTRPRGRTEDGNLDLDLDSRIELEMRTNHKELAEHLMLVDLARNDLARICKPGSRYVSDLVKVDKYSHVMHLVSKVIGELKEGLDALHAYASCMNMGTLTGAPKVRAMQLIAEYEKEKRGSYGGAIGYFTDLGNLDTCITIRSAYVENIATIQAGAGIVYNSIPEDEVNESLNKAQAVINAIKNAHY.

Residues Thr40 and 291 to 293 (PYM) each bind L-tryptophan. 328–329 (GT) contacts chorismate. Glu361 lines the Mg(2+) pocket. Chorismate is bound by residues Tyr449, Arg469, 482–484 (GAG), and Gly484. Glu497 contributes to the Mg(2+) binding site.

Belongs to the anthranilate synthase component I family. As to quaternary structure, heterotetramer consisting of two non-identical subunits: a beta subunit (TrpG) and a large alpha subunit (TrpE). It depends on Mg(2+) as a cofactor.

It carries out the reaction chorismate + L-glutamine = anthranilate + pyruvate + L-glutamate + H(+). It functions in the pathway amino-acid biosynthesis; L-tryptophan biosynthesis; L-tryptophan from chorismate: step 1/5. Feedback inhibited by tryptophan. Its function is as follows. Part of a heterotetrameric complex that catalyzes the two-step biosynthesis of anthranilate, an intermediate in the biosynthesis of L-tryptophan. In the first step, the glutamine-binding beta subunit (TrpG) of anthranilate synthase (AS) provides the glutamine amidotransferase activity which generates ammonia as a substrate that, along with chorismate, is used in the second step, catalyzed by the large alpha subunit of AS (TrpE) to produce anthranilate. In the absence of TrpG, TrpE can synthesize anthranilate directly from chorismate and high concentrations of ammonia. This Buchnera aphidicola subsp. Rhopalosiphum maidis protein is Anthranilate synthase component 1 (trpE).